Here is a 334-residue protein sequence, read N- to C-terminus: N-acetyl-gamma-glutamyl-phosphate reductase (334 aa).

The active site involves Cys-149.

This sequence belongs to the NAGSA dehydrogenase family. Type 1 subfamily.

It is found in the cytoplasm. The enzyme catalyses N-acetyl-L-glutamate 5-semialdehyde + phosphate + NADP(+) = N-acetyl-L-glutamyl 5-phosphate + NADPH + H(+). It functions in the pathway amino-acid biosynthesis; L-arginine biosynthesis; N(2)-acetyl-L-ornithine from L-glutamate: step 3/4. Functionally, catalyzes the NADPH-dependent reduction of N-acetyl-5-glutamyl phosphate to yield N-acetyl-L-glutamate 5-semialdehyde. This Sulfurimonas denitrificans (strain ATCC 33889 / DSM 1251) (Thiomicrospira denitrificans (strain ATCC 33889 / DSM 1251)) protein is N-acetyl-gamma-glutamyl-phosphate reductase.